Here is a 162-residue protein sequence, read N- to C-terminus: Chemoreceptor glutamine deamidase CheD (162 aa).

This sequence belongs to the CheD family. As to quaternary structure, forms a complex with CheC.

The catalysed reaction is L-glutaminyl-[protein] + H2O = L-glutamyl-[protein] + NH4(+). Its function is as follows. Deamidates glutamine residues to glutamate on methyl-accepting chemotaxis receptors (MCPs). CheD-mediated MCP deamidation is required for productive communication of the conformational signals of the chemoreceptors to the CheA kinase. This chain is Chemoreceptor glutamine deamidase CheD, found in Halalkalibacterium halodurans (strain ATCC BAA-125 / DSM 18197 / FERM 7344 / JCM 9153 / C-125) (Bacillus halodurans).